Here is a 310-residue protein sequence, read N- to C-terminus: uncharacterized protein (310 aa).

Over residues 1-11 (MKVKSILKHSR) the composition is skewed to basic residues. Disordered stretches follow at residues 1–227 (MKVK…SDHA) and 242–310 (AMEE…NENE). Residues 12–50 (MSSPSLETDSMESGQQQNMVSSTPSIDMNESDCSGTGTP) show a composition bias toward polar residues. The segment covering 51 to 80 (SEERIRRLRWDEENLSKAEQQKSAKMKITE) has biased composition (basic and acidic residues). Residues 91–105 (PDDEVPEINLDETDS) show a composition bias toward acidic residues. Residues 110–121 (TAGTLGDTLGTL) are compositionally biased toward low complexity. 2 stretches are compositionally biased toward basic and acidic residues: residues 126–150 (VSKD…KKEP) and 182–195 (LPSK…ETKP). Residues 242 to 253 (AMEEEALSEAEE) show a composition bias toward acidic residues. Residues 254–265 (NIPKKKPDFNEL) are compositionally biased toward basic and acidic residues. At Ser285 the chain carries Phosphoserine. The span at 297–310 (DSGSASDVNMNENE) shows a compositional bias: polar residues.

This is an uncharacterized protein from Schizosaccharomyces pombe (strain 972 / ATCC 24843) (Fission yeast).